The following is a 341-amino-acid chain: Phosphoribosylformylglycinamidine cyclo-ligase (341 aa).

Belongs to the AIR synthase family.

It is found in the cytoplasm. The catalysed reaction is 2-formamido-N(1)-(5-O-phospho-beta-D-ribosyl)acetamidine + ATP = 5-amino-1-(5-phospho-beta-D-ribosyl)imidazole + ADP + phosphate + H(+). It participates in purine metabolism; IMP biosynthesis via de novo pathway; 5-amino-1-(5-phospho-D-ribosyl)imidazole from N(2)-formyl-N(1)-(5-phospho-D-ribosyl)glycinamide: step 2/2. The sequence is that of Phosphoribosylformylglycinamidine cyclo-ligase from Thermosynechococcus vestitus (strain NIES-2133 / IAM M-273 / BP-1).